The following is a 151-amino-acid chain: Deoxyuridine 5'-triphosphate nucleotidohydrolase (151 aa).

Substrate contacts are provided by residues 70–72, N83, 87–89, and M97; these read RSG and LID.

This sequence belongs to the dUTPase family. Mg(2+) is required as a cofactor.

It catalyses the reaction dUTP + H2O = dUMP + diphosphate + H(+). Its pathway is pyrimidine metabolism; dUMP biosynthesis; dUMP from dCTP (dUTP route): step 2/2. Its function is as follows. This enzyme is involved in nucleotide metabolism: it produces dUMP, the immediate precursor of thymidine nucleotides and it decreases the intracellular concentration of dUTP so that uracil cannot be incorporated into DNA. In Sodalis glossinidius (strain morsitans), this protein is Deoxyuridine 5'-triphosphate nucleotidohydrolase.